Consider the following 147-residue polypeptide: MEIILKEDIVNLGYKNDIVNVKSGYGRNYLIPTGKAIIASPSAKKMLAEDLKQRAHKLEKIKKDAEALAAKLEGVSLTIATKVSSTGTIFGSVSNIQIAEALAKLGHEIDRKIIVVKDAVKEVGNYKAIVKLHKEVSVEIPFEVVAE.

Belongs to the bacterial ribosomal protein bL9 family.

Functionally, binds to the 23S rRNA. The chain is Large ribosomal subunit protein bL9 from Bacteroides thetaiotaomicron (strain ATCC 29148 / DSM 2079 / JCM 5827 / CCUG 10774 / NCTC 10582 / VPI-5482 / E50).